The chain runs to 147 residues: Hemoglobin subunit beta-2 (147 aa).

Residues 3–147 (HWTAEEKAAI…LVDGLSQGYN (145 aa)) form the Globin domain. Heme b-binding residues include His-64 and His-93.

This sequence belongs to the globin family. As to quaternary structure, heterotetramer of two alpha chains and two beta chains. Red blood cells.

In terms of biological role, involved in oxygen transport from the lung to the various peripheral tissues. This Xenopus laevis (African clawed frog) protein is Hemoglobin subunit beta-2 (hbb2).